The chain runs to 344 residues: Phenylalanine--tRNA ligase alpha subunit (344 aa).

Position 256 (glutamate 256) interacts with Mg(2+).

Belongs to the class-II aminoacyl-tRNA synthetase family. Phe-tRNA synthetase alpha subunit type 1 subfamily. Tetramer of two alpha and two beta subunits. Requires Mg(2+) as cofactor.

It is found in the cytoplasm. The catalysed reaction is tRNA(Phe) + L-phenylalanine + ATP = L-phenylalanyl-tRNA(Phe) + AMP + diphosphate + H(+). The polypeptide is Phenylalanine--tRNA ligase alpha subunit (pheS) (Bacillus subtilis (strain 168)).